The sequence spans 100 residues: DNA base-flipping protein (100 aa).

Belongs to the MGMT family. ATL subfamily.

In terms of biological role, involved in DNA damage recognition. Binds DNA containing O(6)-methylguanine. Binds to the damaged base and flips the base out of the DNA duplex into an extrahelical conformation, which allows processing by repair proteins. This is DNA base-flipping protein from Vibrio parahaemolyticus serotype O3:K6 (strain AQ3810).